The chain runs to 1089 residues: WD repeat-containing protein on Y chromosome (1089 aa).

WD repeat units lie at residues 155 to 199 (EEVA…IRTA), 207 to 249 (PHAV…RGPF), 329 to 368 (RIPL…EPSA), 372 to 411 (GHNG…LLQT), 462 to 501 (THAA…RKII), 514 to 553 (TIDI…VIRN), and 601 to 641 (FHTD…RRYS). The interval 661 to 684 (KRSKRWASRAPHSGSHMMSHTGSH) is disordered. Residues 672-684 (HSGSHMMSHTGSH) are compositionally biased toward low complexity. 2 WD repeats span residues 767–806 (KTGD…IPEA) and 850–889 (GHLK…LGTL). Residues 1049-1089 (LNIKLPSRRRSDRTNDPRNMRTAKTRGDMGLGHRSSHTSQN) form a disordered region.

This Drosophila willistoni (Fruit fly) protein is WD repeat-containing protein on Y chromosome.